A 551-amino-acid chain; its full sequence is uncharacterized protein (551 aa).

Residues 1–7 are Cytoplasmic-facing; it reads MKKNSSV. Residues 8-28 form a helical membrane-spanning segment; that stretch reads VFFLVGLSQFVTMAFLIIGSI. At 29-88 the chain is on the vacuolar side; it reads TAPIFKQIGYSKYDEITYGTFGYCKEGSCSKASYNYHPDELSDSDSNWKLNSNARSILGK. A helical membrane pass occupies residues 89–109; sequence IIFITPIAAGLNFLGFLCTIM. Residues 110–135 lie on the Cytoplasmic side of the membrane; that stretch reads SVLLINVLSSDRVGSASAIMFFVNLT. The helical transmembrane segment at 136 to 156 threads the bilayer; the sequence is FSTLGFLSASLICIVVFLLFY. Residues 157 to 160 lie on the Vacuolar side of the membrane; it reads PHVT. The chain crosses the membrane as a helical span at residues 161 to 181; sequence WCSWVLIPGAALSLLVIPLIF. The Cytoplasmic segment spans residues 182–551; it reads SAYSRSSGSR…TSLNNPYGFR (370 aa). Phosphoserine is present on residues serine 224 and serine 232. A disordered region spans residues 280–341; the sequence is AKDMENSNGS…NGSNTSNNIN (62 aa). Residues 307 to 320 show a composition bias toward polar residues; it reads TSTYSVIESESGLK. The span at 321–341 shows a compositional bias: low complexity; the sequence is NGSVSNNYVRNNGSNTSNNIN. The residue at position 363 (serine 363) is a Phosphoserine.

In terms of assembly, forms homo dimers or homooligomers in MCC microdomains. Interacts with BOI2 and RHO3, two key regulators of secretion.

The protein localises to the vacuole membrane. Its subcellular location is the cell membrane. In terms of biological role, protein involved in secretion and cell wall organization. Contributes to cell surface-related functions as a auxiliary component of MCC/eisosome that specifically interacts with the secretory pathway. This is an uncharacterized protein from Saccharomyces cerevisiae (strain ATCC 204508 / S288c) (Baker's yeast).